The sequence spans 1284 residues: MRPPNKEIPRILAFFTAFTLFGSTLALLPAPPAHAYVSSLGNLISSSVTGDTLTLTVDNGAEPSDDLLIVQAVQNGILKVDYRPNSITPSAKTPMLDPNKTWSAVGATINTTANPMTITTSNMKIEITKNPVRMTVKKADGTTLFWEPSGGGVFSDGVRFLHATGDNMYGIRSFNAFDSGGDLLRNSSNHAAHAGEQGDSGGPLIWSTAGYGLLVDSDGGYPYTDSTTGQMEFYYGGTPPEGRRYAKQNVEYYIMLGTPKEIMTDVGEITGKPPMLPKWSLGFMNFEWDTNQTEFTNNVDTYRAKNIPIDAYAFDYDWKKYGETNYGEFAWNTTNFPSASTTSLKSTMDAKGIKMIGITKPRIVTKDASANVTTQGTDATNGGYFYPGHNEYQDYFIPVTVRSIDPYNANERAWFWNHSTDALNKGIVGWWNDETDKVSSGGALYWFGNFTTGHMSQTMYEGGRAYTSGAQRVWQTARTFYPGAQRYATTLWSGDIGIQYNKGERINWAAGMQEQRAVMLSSVNNGQVKWGMDTGGFNQQDGTTNNPNPDLYARWMQFSALTPVFRVHGNNHQQRQPWYFGSTAEEASKEAIQLRYSLIPYMYAYERSAYENGNGLVRPLMQAYPTDAAVKNYTDAWMFGDWLLAAPVVDKQQTSKDIYLPSGSWIDYARGNAITGGQTIRYSVNPDTLTDMPLFIKKGAIIPTQKVQDYVGQASVTSVDVDVFPDTTQSSFTYYDDDGASYNYESGTYFKQNMTAQDNGSGSLSFTLGAKSGSYTPALQSYIVKLHGSAGTSVTNNSAAMTSYASLEALKAAAGEGWATGKDIYGDVTYVKVTAGTASSKSIAVTGVAAVSATTSQYEAEDASLSGNSVAAKASINTNHTGYTGTGFVDGLGNDGAGVTFYPKVKTGGDYNVSLRYANASGTAKSVSIFVNGKRVKSTSLANLANWDTWSTQSETLPLTAGVNVVTYKYYSDAGDTGNVNIDNITVPFAPIIGKYEAESAELSGGSSLNTNHWYYSGTAFVDGLSAVGAQVKYNVNVPSAGSYQVALRYANGSAATKTLSTYINGAKLGQTSFTSPGTNWNVWQDNVQTVTLNAGANTIAFKYDAADSGNINVDRLLLSTSAAGTPVSEQNLLDNPGFERDTSQTNNWIEWHPGTQAVAFGVDSGSTTNPPESPWSGDKRAYFFAAGAYQQSIHQTISVPVNNVKYKFEAWVRMKNTTPTTARAEIQNYGGSAIYANISNSGVWKYISVSDIMVTNGQIDVGFYVDSPGGTTLHIDDVRVTKQ.

A signal peptide spans 1 to 35 (MRPPNKEIPRILAFFTAFTLFGSTLALLPAPPAHA). The active-site Nucleophile is the Asp433. Residue Asp436 is part of the active site. Asp495 acts as the Proton donor in catalysis. CBM6 domains are found at residues 856 to 988 (SQYE…ITVP) and 994 to 1120 (GKYE…LLLS).

It belongs to the glycosyl hydrolase 31 family.

The protein resides in the secreted. It carries out the reaction 2 D-maltotetraose = alpha-isomaltosyl-(1-&gt;4)-D-maltotriose + D-maltotriose. The enzyme catalyses Transfers an alpha-D-glucosyl residue in a (1-&gt;4)-alpha-D-glucan to the primary hydroxy group of glucose, free or combined in a (1-&gt;4)-alpha-D-glucan.. With respect to regulation, strongly activated and stabilized by various divalent cations. Strongly inhibited by Cu(2+), Hg(2+) and EDTA, and moderately inhibited by Tris. Functionally, glycosyltransferase involved, together with CtsY, in the conversion of alpha-1,4-glucan into a cyclic tetrasaccharide (CTS) constructed from four alpha-glucopyranosyl residues. Catalyzes an intermolecular transglucosylation in which a glucose residue at the non-reducing end of maltotetraose is transferred to the 6-OH of an other non-reducing glucose, leading to the formation of alpha-isomaltosyl-(1-&gt;4)-D-maltotriose. Has a wide substrate specificity, and acts on oligosaccharides with alpha-1,4-glucosidic linkages at the non-reducing end, except for maltose. In contrast, has little activity toward oligosaccharides with alpha-1,6-glucosidic linkages at the non-reducing end. In Sporosarcina globispora (Bacillus globisporus), this protein is 1,6-alpha-glucosyltransferase.